The following is a 114-amino-acid chain: Small ribosomal subunit protein uS15 (114 aa).

It belongs to the universal ribosomal protein uS15 family.

The protein is Small ribosomal subunit protein uS15 (RpS13) of Musca domestica (House fly).